Here is a 398-residue protein sequence, read N- to C-terminus: DNA replication and repair protein RecF (398 aa).

30–37 (GRNGFGKT) lines the ATP pocket.

This sequence belongs to the RecF family.

Its subcellular location is the cytoplasm. The RecF protein is involved in DNA metabolism; it is required for DNA replication and normal SOS inducibility. RecF binds preferentially to single-stranded, linear DNA. It also seems to bind ATP. The sequence is that of DNA replication and repair protein RecF from Corynebacterium efficiens (strain DSM 44549 / YS-314 / AJ 12310 / JCM 11189 / NBRC 100395).